The primary structure comprises 307 residues: MMIISSQILLLFGFKLFFETRGEDDIVELLCKIGQTQIPSSDPLPILRGSGSGGREENTPLPPPLPHQNLFIQEDEMSSWPHHPLRQDYLCSELYASTPAPHPQSSVSLAPPPPKPPSSAPYGQIIAPRSAPRIQGTEEARGSTSRKRSRAAEMHNLAERRRREKINERMKTLQQLIPRCNKSTKVSMLEDVIEYVKSLEMQINQFMPHMAMGMNQPPAYIPFPSQAHMAGVGPSYPPPRYPFPNIQTFDPSRVWLQSPQPNPVSNQPQMNPYGQFVGHHQMQQSLPPPLQVILSQYPLCLFLCSNK.

Disordered regions lie at residues 41 to 68 and 101 to 155; these read SDPL…LPHQ and PHPQ…AEMH. Residues 110 to 119 are compositionally biased toward pro residues; that stretch reads APPPPKPPSS. Positions 150–199 constitute a bHLH domain; the sequence is RAAEMHNLAERRRREKINERMKTLQQLIPRCNKSTKVSMLEDVIEYVKSL.

Belongs to the bHLH protein family. Homodimer.

Its subcellular location is the nucleus. In Arabidopsis thaliana (Mouse-ear cress), this protein is Transcription factor bHLH127 (BHLH127).